A 445-amino-acid chain; its full sequence is tRNA-2-methylthio-N(6)-dimethylallyladenosine synthase (445 aa).

An MTTase N-terminal domain is found at 3–124; that stretch reads KKLYIKTYGC…LPELISKVVR (122 aa). Positions 12, 48, 87, 162, 166, and 169 each coordinate [4Fe-4S] cluster. The region spanning 148–380 is the Radical SAM core domain; that stretch reads YPQGASSFIS…QQELATQQLA (233 aa). The region spanning 383–445 is the TRAM domain; sequence QSCVGSTMRV…ALNSLTGEIL (63 aa).

It belongs to the methylthiotransferase family. MiaB subfamily. As to quaternary structure, monomer. Requires [4Fe-4S] cluster as cofactor.

Its subcellular location is the cytoplasm. The enzyme catalyses N(6)-dimethylallyladenosine(37) in tRNA + (sulfur carrier)-SH + AH2 + 2 S-adenosyl-L-methionine = 2-methylsulfanyl-N(6)-dimethylallyladenosine(37) in tRNA + (sulfur carrier)-H + 5'-deoxyadenosine + L-methionine + A + S-adenosyl-L-homocysteine + 2 H(+). In terms of biological role, catalyzes the methylthiolation of N6-(dimethylallyl)adenosine (i(6)A), leading to the formation of 2-methylthio-N6-(dimethylallyl)adenosine (ms(2)i(6)A) at position 37 in tRNAs that read codons beginning with uridine. The protein is tRNA-2-methylthio-N(6)-dimethylallyladenosine synthase of Rickettsia prowazekii (strain Madrid E).